A 719-amino-acid polypeptide reads, in one-letter code: Protein borderless (719 aa).

The first 33 residues, 1-33, serve as a signal peptide directing secretion; it reads MPAKRSRTFRQSGSALLALLAIILLMNISCTSA. Residues 34–650 are Extracellular-facing; the sequence is ARDHRRQTNL…IDVPSQRKVR (617 aa). 4 consecutive Ig-like domains span residues 40 to 128, 134 to 241, 246 to 334, and 341 to 429; these read QTNL…CQVS, PSVR…AFLN, AKVI…PVIS, and PIFS…AELM. 4 cysteine pairs are disulfide-bonded: cysteine 55–cysteine 125, cysteine 172–cysteine 224, cysteine 267–cysteine 318, and cysteine 363–cysteine 413. Fibronectin type-III domains lie at 434 to 527 and 555 to 646; these read APRA…TLPS and APWN…VPSQ. The helical transmembrane segment at 651-671 threads the bilayer; the sequence is ALIIGSSVGVIFLLCALCAFL. Residues 672-719 lie on the Cytoplasmic side of the membrane; that stretch reads YVKRSCLRHLFAKDSSASEDEDTAESGDCDSDEQDQRDRDSIKIRQST. The segment at 685–719 is disordered; it reads DSSASEDEDTAESGDCDSDEQDQRDRDSIKIRQST. The span at 688 to 704 shows a compositional bias: acidic residues; sequence ASEDEDTAESGDCDSDE. Positions 705 to 719 are enriched in basic and acidic residues; sequence QDQRDRDSIKIRQST.

This sequence belongs to the immunoglobulin superfamily. As to quaternary structure, interacts with tutl. In the visual system, expressed in lamina and medulla (at protein level).

The protein localises to the cell membrane. It localises to the cell projection. The protein resides in the axon. In the developing eye, has a role in axonal targeting of the R7 photoreceptor where it functions together with tutl. Probably mediates homotypic cell adhesion; the effect is inhibited by Lar. This chain is Protein borderless, found in Drosophila melanogaster (Fruit fly).